Reading from the N-terminus, the 75-residue chain is GCFEDWSRCSPSTASATGVLWRSCDSYCKVCFKADRGECYDSPSLNCPHRLPNNKQCRCINARTAKDNRNPTCWA.

5 cysteine pairs are disulfide-bonded: C2/C9, C24/C28, C31/C73, C39/C47, and C57/C59.

Belongs to the macin family.

It is found in the secreted. In terms of biological role, has a bactericial activity. This is Theromacin from Hirudo medicinalis (Medicinal leech).